Reading from the N-terminus, the 578-residue chain is Serine/threonine-protein kinase D6PKL3 (578 aa).

A compositionally biased stretch (low complexity) spans 1–24; the sequence is MDSSSSVVYVGSSSKSRNFQSKSK. Residues 1 to 64 are disordered; the sequence is MDSSSSVVYV…EVIESSVSSV (64 aa). Residues 25–34 are compositionally biased toward polar residues; that stretch reads GSITSFSIDS. Residues 53-64 show a composition bias toward low complexity; that stretch reads SPEVIESSVSSV. The region spanning 182–516 is the Protein kinase domain; the sequence is FKLIKKLGGG…ATEIKQHPFF (335 aa). Residues 188-196 and K211 contribute to the ATP site; that span reads LGGGDIGNV. D307 (proton acceptor) is an active-site residue. An activation loop region spans residues 325–426; sequence DFDLSLRCAV…VGTHEYLAPE (102 aa). Positions 575-578 match the PIF motif; the sequence is IDFF.

Belongs to the protein kinase superfamily. AGC Ser/Thr protein kinase family. As to expression, expressed predominantly in root tissue with lower levels found in leaf, stem, seed and flower.

The protein resides in the cell membrane. The catalysed reaction is L-seryl-[protein] + ATP = O-phospho-L-seryl-[protein] + ADP + H(+). It carries out the reaction L-threonyl-[protein] + ATP = O-phospho-L-threonyl-[protein] + ADP + H(+). In terms of biological role, protein kinase that regulates the auxin transport activity of PIN auxin efflux facilitators by direct phosphorylation. D6PK-mediated PIN phosphorylation promotes auxin transport in the hypocotyl and this is a prerequisite for PHOT1-dependent hypocotyl bending. The sequence is that of Serine/threonine-protein kinase D6PKL3 (D6PKL3) from Arabidopsis thaliana (Mouse-ear cress).